The primary structure comprises 194 residues: 7-methyl-GTP pyrophosphatase (194 aa).

The active-site Proton acceptor is aspartate 71.

This sequence belongs to the Maf family. YceF subfamily. A divalent metal cation is required as a cofactor.

The protein resides in the cytoplasm. It carries out the reaction N(7)-methyl-GTP + H2O = N(7)-methyl-GMP + diphosphate + H(+). Its function is as follows. Nucleoside triphosphate pyrophosphatase that hydrolyzes 7-methyl-GTP (m(7)GTP). May have a dual role in cell division arrest and in preventing the incorporation of modified nucleotides into cellular nucleic acids. The protein is 7-methyl-GTP pyrophosphatase of Aromatoleum aromaticum (strain DSM 19018 / LMG 30748 / EbN1) (Azoarcus sp. (strain EbN1)).